We begin with the raw amino-acid sequence, 548 residues long: Esterase-5A (548 aa).

Positions 1–19 (MHLVRWLICLIQLWIQLGA) are cleaved as a signal peptide. A disulfide bridge links Cys-87 with Cys-106. 2 N-linked (GlcNAc...) asparagine glycosylation sites follow: Asn-95 and Asn-116. The active-site Acyl-ester intermediate is Ser-210. Residues Cys-262 and Cys-274 are joined by a disulfide bond. A glycan (N-linked (GlcNAc...) asparagine) is linked at Asn-479. Residues Cys-518 and Cys-539 are joined by a disulfide bond.

This sequence belongs to the type-B carboxylesterase/lipase family.

It localises to the secreted. The enzyme catalyses a carboxylic ester + H2O = an alcohol + a carboxylate + H(+). The sequence is that of Esterase-5A (Est-5A) from Drosophila persimilis (Fruit fly).